A 772-amino-acid polypeptide reads, in one-letter code: Delta-like protein A (772 aa).

A signal peptide spans 1–20 (MGRHLLLLLFSILYMLLCQA). Residues 21 to 536 (SSSGVFELKL…SQIASDVPWT (516 aa)) lie on the Extracellular side of the membrane. A DSL domain is found at 179-223 (FVCDEHYYGEGCSVFCRPRDDAFGHFTCGERGEIICDAGWKGQYC). 26 disulfides stabilise this stretch: cysteine 181-cysteine 190, cysteine 194-cysteine 206, cysteine 214-cysteine 223, cysteine 228-cysteine 239, cysteine 232-cysteine 245, cysteine 259-cysteine 270, cysteine 265-cysteine 276, cysteine 278-cysteine 287, cysteine 294-cysteine 306, cysteine 300-cysteine 316, cysteine 318-cysteine 327, cysteine 334-cysteine 345, cysteine 339-cysteine 354, cysteine 356-cysteine 365, cysteine 372-cysteine 383, cysteine 377-cysteine 393, cysteine 395-cysteine 404, cysteine 411-cysteine 422, cysteine 416-cysteine 431, cysteine 433-cysteine 442, cysteine 449-cysteine 460, cysteine 454-cysteine 469, cysteine 471-cysteine 480, cysteine 487-cysteine 498, cysteine 492-cysteine 507, and cysteine 509-cysteine 518. EGF-like domains are found at residues 225-257 (EPICLPGCDEEHGFCEKPGECKCRVGFKGRYCD), 257-288 (DECIRYPGCLHGTCQQPWQCNCQEGWGGLFCN), and 290-328 (DLNYCTHHKPCLNGATCSNTGQGSYTCSCRPGFSGASCE). The EGF-like 4; calcium-binding domain maps to 330–366 (EVNECTGNPCRNGGSCTDMENTYSCTCPPGFYGKNCE). 4 EGF-like domains span residues 368–405 (SAMTCADGPCFNGGRCADNPDGGYFCQCPTGYAGFNCE), 407–443 (KIDHCSSSPCSNGARCVDLVNSYLCQCPDGFTGMNCD), 445–481 (AGDECSMYPCQNGGTCQEGASGYMCTCPPGYTGRNCS), and 483–519 (PVSRCQHNPCHNGATCHERNNRYVCACVSGYGGRNCQ). The N-linked (GlcNAc...) asparagine glycan is linked to asparagine 479. A helical membrane pass occupies residues 537 to 557 (AVGSGVLLVLLLVVACAVVVV). Residues 558–772 (CVRSKVQQRR…KDECVIATEV (215 aa)) are Cytoplasmic-facing. Residues 688-722 (EEKRRKRLKSDASEKSKYSESRYSESKYSESKYSE) are disordered. The span at 696 to 722 (KSDASEKSKYSESRYSESKYSESKYSE) shows a compositional bias: basic and acidic residues.

As to quaternary structure, interacts with mib. Post-translationally, ubiquitinated by mib, leading to its endocytosis and subsequent degradation. Ubiquitinated by the ECS(ASB11) complex, leading to its degradation by the proteasome. As to expression, expressed in nervous system. In the developing nervous system, it is expressed in overlapping regions with deltaB (dlb) and deltaD (dld); in the neural plate, dla is expressed in patches of contiguous cells with dld, while dlb is confined to scattered cells within those patches that will differentiate as neurons. In 24 hours embryos, expressed in the hindbrain in stripes adjacent to rhombomere boundaries, but not in the actual boundary cells. During gastrulation and tail formation, expressed in embryonic midline cells. Expressed in hair cells of inner ear.

The protein resides in the membrane. Acts as a ligand for Notch receptors and is involved in primary neurogenesis. Can activate Notch receptors, thereby playing a key role in lateral inhibition, a process that prevents the immediate neighbors of each nascent neural cell from simultaneously embarking on neural differentiation. Required for boundary formation during segmentation of the hindbrain. Required for midline cell fate specification prior to germ layer formation; regulates specification of floorplate, notochord and hypochord. In inner ear, it prevents adjacent cells from adopting the same cell fate. Plays a role in angiogenesis. This chain is Delta-like protein A (dla), found in Danio rerio (Zebrafish).